The sequence spans 455 residues: MSFLIDSSIMITSQILFFGFGWLFFMRQLFKDYEVRQYVVQVIFSVTFAFSCTMFELIIFEILGVLNSSSRYFHWKMNLCVILLILVFMVPFYIGYFIVSNIRLLHKQRLLFSCLLWLTFMYFFWKLGDPFPILSPKHGILSIEQLISRVGVIGVTLMALLSGFGAVNCPYTYMSYFLRNVTDTDILALERRLLQTMDMIISKKKRMAMTRRTMFQKGEVHNKPSGFWGMIKSVTTSAPGSENLTLIQQEVDALEELSRQLFLETADLYATKERIEYSKTFKGKYFNFLGYFFSIYCVWKIFMATINIVFDRVGKTDPVTRGIEITVNYLGIQFDVKFWSQHISFILVGIIIVTSIRGLLITLTKFFYAISSSKSSNVIVLLLAQIMGMYFVSSVLLIRMSMPLEYRTIITEVLGELQFNFYHRWFDVIFLVSALSSILFLYLAHKQAPEKHMAP.

The next 5 helical transmembrane spans lie at 5–25, 46–66, 79–99, 114–134, and 150–170; these read IDSS…WLFF, VTFA…LGVL, LCVI…YFIV, CLLW…FPIL, and VGVI…VNCP. N-linked (GlcNAc...) asparagine glycans are attached at residues N180 and N243. 4 helical membrane-spanning segments follow: residues 290-310, 343-363, 378-398, and 425-445; these read GYFF…NIVF, ISFI…LITL, VIVL…VLLI, and WFDV…YLAH.

This sequence belongs to the Golgi pH regulator (TC 1.A.38) family. Homotrimer. Interacts with RABL3; the interaction stabilizes GPR89A.

It is found in the golgi apparatus membrane. The catalysed reaction is iodide(out) = iodide(in). It catalyses the reaction chloride(in) = chloride(out). The enzyme catalyses bromide(in) = bromide(out). It carries out the reaction fluoride(in) = fluoride(out). Voltage-gated channel that enables the transfer of monoatomic anions such as iodide, chloride, bromide and fluoride which may function in counter-ion conductance and participates in Golgi acidification. Plays a role in lymphocyte development, probably by acting as a RABL3 effector in hematopoietic cells. The polypeptide is Golgi pH regulator (Bos taurus (Bovine)).